A 324-amino-acid polypeptide reads, in one-letter code: tRNA dimethylallyltransferase (324 aa).

17-24 (GPTASGKT) is a binding site for ATP. Position 19–24 (19–24 (TASGKT)) interacts with substrate. Interaction with substrate tRNA stretches follow at residues 42-45 (DSAL), 166-170 (QRIQR), 251-256 (RCVGYR), and 284-291 (KRQITWLR).

Belongs to the IPP transferase family. Monomer. It depends on Mg(2+) as a cofactor.

It carries out the reaction adenosine(37) in tRNA + dimethylallyl diphosphate = N(6)-dimethylallyladenosine(37) in tRNA + diphosphate. Its function is as follows. Catalyzes the transfer of a dimethylallyl group onto the adenine at position 37 in tRNAs that read codons beginning with uridine, leading to the formation of N6-(dimethylallyl)adenosine (i(6)A). This Burkholderia lata (strain ATCC 17760 / DSM 23089 / LMG 22485 / NCIMB 9086 / R18194 / 383) protein is tRNA dimethylallyltransferase.